We begin with the raw amino-acid sequence, 371 residues long: Bifunctional enzyme IspD/IspF (371 aa).

The tract at residues 1–210 (MSEISLIMLA…LDLPTPSFEI (210 aa)) is 2-C-methyl-D-erythritol 4-phosphate cytidylyltransferase. Residues 211-371 (FTGNGFDVHE…NLKYFDWTRL (161 aa)) are 2-C-methyl-D-erythritol 2,4-cyclodiphosphate synthase. Residues aspartate 217 and histidine 219 each contribute to the a divalent metal cation site. 4-CDP-2-C-methyl-D-erythritol 2-phosphate-binding positions include 217–219 (DVH) and 243–244 (HS). A divalent metal cation is bound at residue histidine 251. Residues 265–267 (DIG), 270–274 (YPDTD), 341–344 (TTTE), phenylalanine 348, and arginine 351 each bind 4-CDP-2-C-methyl-D-erythritol 2-phosphate.

The protein in the N-terminal section; belongs to the IspD/TarI cytidylyltransferase family. IspD subfamily. It in the C-terminal section; belongs to the IspF family. A divalent metal cation is required as a cofactor.

The catalysed reaction is 2-C-methyl-D-erythritol 4-phosphate + CTP + H(+) = 4-CDP-2-C-methyl-D-erythritol + diphosphate. The enzyme catalyses 4-CDP-2-C-methyl-D-erythritol 2-phosphate = 2-C-methyl-D-erythritol 2,4-cyclic diphosphate + CMP. The protein operates within isoprenoid biosynthesis; isopentenyl diphosphate biosynthesis via DXP pathway; isopentenyl diphosphate from 1-deoxy-D-xylulose 5-phosphate: step 2/6. Its pathway is isoprenoid biosynthesis; isopentenyl diphosphate biosynthesis via DXP pathway; isopentenyl diphosphate from 1-deoxy-D-xylulose 5-phosphate: step 4/6. In terms of biological role, bifunctional enzyme that catalyzes the formation of 4-diphosphocytidyl-2-C-methyl-D-erythritol from CTP and 2-C-methyl-D-erythritol 4-phosphate (MEP) (IspD), and catalyzes the conversion of 4-diphosphocytidyl-2-C-methyl-D-erythritol 2-phosphate (CDP-ME2P) to 2-C-methyl-D-erythritol 2,4-cyclodiphosphate (ME-CPP) with a corresponding release of cytidine 5-monophosphate (CMP) (IspF). The protein is Bifunctional enzyme IspD/IspF of Campylobacter jejuni subsp. jejuni serotype O:6 (strain 81116 / NCTC 11828).